The chain runs to 306 residues: Elongation factor Ts (306 aa).

Residues 80–83 (TDFV) are involved in Mg(2+) ion dislocation from EF-Tu.

It belongs to the EF-Ts family.

The protein resides in the cytoplasm. In terms of biological role, associates with the EF-Tu.GDP complex and induces the exchange of GDP to GTP. It remains bound to the aminoacyl-tRNA.EF-Tu.GTP complex up to the GTP hydrolysis stage on the ribosome. This chain is Elongation factor Ts, found in Clostridium acetobutylicum (strain ATCC 824 / DSM 792 / JCM 1419 / IAM 19013 / LMG 5710 / NBRC 13948 / NRRL B-527 / VKM B-1787 / 2291 / W).